A 78-amino-acid polypeptide reads, in one-letter code: uncharacterized protein (78 aa).

This is an uncharacterized protein from Treponema pallidum (strain Nichols).